We begin with the raw amino-acid sequence, 379 residues long: MRQTVKGCAVTIDQVSKAYGHCLAVDRATVHIRQGEFFSILGPSGCGKTTLLRIIAGFEQPDSGDLTFDHVSVLGVGANKRRSNTVFQSYALFPHLSVYENIAFPLRLKRLSKNLIRERVHEYLHLVQLDEHLHKKPHQLSGGQQQRVAIARALVCEPGVLLLDEPLSALDAKLRSNLLIELDTLHDQTGITFVFITHDQSEALSVSDRIAVMNKGKILQIGTPYEIYEQPATDFVAKFIGETNSFLSTVVSCTAIENEEFMLSLQVPELDRTLTVTADNPIDPGRRVCFTVRPEKIHISLEEPGTTSAPLNVFRGFVEEPVYAGFQSKFFVQLESGAIIQVFQQHQKYLDTGPEIAWKDTVYVSWSAHDGYVVEDIES.

One can recognise an ABC transporter domain in the interval valine 10–isoleucine 240. Glycine 42–threonine 49 contributes to the ATP binding site.

It belongs to the ABC transporter superfamily. Spermidine/putrescine importer (TC 3.A.1.11.1) family. As to quaternary structure, the complex is composed of two ATP-binding proteins (PotA), two transmembrane proteins (PotB and PotC) and a solute-binding protein (PotD).

It is found in the cell inner membrane. The catalysed reaction is ATP + H2O + polyamine-[polyamine-binding protein]Side 1 = ADP + phosphate + polyamineSide 2 + [polyamine-binding protein]Side 1.. Part of the ABC transporter complex PotABCD involved in spermidine/putrescine import. Responsible for energy coupling to the transport system. The chain is Spermidine/putrescine import ATP-binding protein PotA from Treponema pallidum (strain Nichols).